A 172-amino-acid polypeptide reads, in one-letter code: Shikimate kinase (172 aa).

Gly11–Thr16 contributes to the ATP binding site. Position 15 (Ser15) interacts with Mg(2+). Asp33, Arg57, and Gly79 together coordinate substrate. Residue Arg117 coordinates ATP. Arg136 serves as a coordination point for substrate. Position 153 (Arg153) interacts with ATP.

It belongs to the shikimate kinase family. As to quaternary structure, monomer. Requires Mg(2+) as cofactor.

It is found in the cytoplasm. It carries out the reaction shikimate + ATP = 3-phosphoshikimate + ADP + H(+). It participates in metabolic intermediate biosynthesis; chorismate biosynthesis; chorismate from D-erythrose 4-phosphate and phosphoenolpyruvate: step 5/7. Functionally, catalyzes the specific phosphorylation of the 3-hydroxyl group of shikimic acid using ATP as a cosubstrate. The polypeptide is Shikimate kinase (Pseudomonas entomophila (strain L48)).